Here is a 216-residue protein sequence, read N- to C-terminus: Acetate CoA-transferase subunit beta (216 aa).

Residue Glu-46 is part of the active site.

It belongs to the 3-oxoacid CoA-transferase subunit B family. In terms of assembly, heterotetramer composed of two alpha subunits (AtoD) and two beta subunits (AtoA).

It is found in the cytoplasm. It carries out the reaction an acyl-CoA + acetate = a carboxylate + acetyl-CoA. The enzyme catalyses acetoacetate + acetyl-CoA = acetoacetyl-CoA + acetate. The catalysed reaction is butanoate + acetyl-CoA = butanoyl-CoA + acetate. It catalyses the reaction acetoacetate + butanoyl-CoA = acetoacetyl-CoA + butanoate. It participates in lipid metabolism; short-chain fatty acid metabolism. Inhibited by p-chloromercuribenzoate. Coenzyme A transferase which is involved in short-chain fatty acid degradation and catalyzes the activation of short-chain fatty acids to their respective CoA thiolesters. During acetoacetate degradation, catalyzes the transfer of CoA from acetyl-CoA to acetoacetate by a mechanism involving a covalent enzyme-CoA compound as a reaction intermediate. Utilizes a variety of short chain acyl-CoA and carboxylic acid substrates but exhibits maximal activity with normal and 3-keto substrates. In Escherichia coli (strain K12), this protein is Acetate CoA-transferase subunit beta.